Here is a 321-residue protein sequence, read N- to C-terminus: Acetyl-coenzyme A carboxylase carboxyl transferase subunit beta, chloroplastic (321 aa).

A CoA carboxyltransferase N-terminal domain is found at 47–321; that stretch reads LWAQCDNCEN…FWFYVLRSSL (275 aa). The Zn(2+) site is built by Cys51, Cys54, Cys70, and Cys73. Residues 51 to 73 form a C4-type zinc finger; it reads CDNCENLLYLRFLRENQSVCKEC.

Belongs to the AccD/PCCB family. Acetyl-CoA carboxylase is a heterohexamer composed of biotin carboxyl carrier protein, biotin carboxylase and 2 subunits each of ACCase subunit alpha and ACCase plastid-coded subunit beta (accD). It depends on Zn(2+) as a cofactor.

The protein localises to the plastid. The protein resides in the chloroplast stroma. It carries out the reaction N(6)-carboxybiotinyl-L-lysyl-[protein] + acetyl-CoA = N(6)-biotinyl-L-lysyl-[protein] + malonyl-CoA. It functions in the pathway lipid metabolism; malonyl-CoA biosynthesis; malonyl-CoA from acetyl-CoA: step 1/1. In terms of biological role, component of the acetyl coenzyme A carboxylase (ACC) complex. Biotin carboxylase (BC) catalyzes the carboxylation of biotin on its carrier protein (BCCP) and then the CO(2) group is transferred by the transcarboxylase to acetyl-CoA to form malonyl-CoA. The polypeptide is Acetyl-coenzyme A carboxylase carboxyl transferase subunit beta, chloroplastic (Pinus thunbergii (Japanese black pine)).